A 516-amino-acid chain; its full sequence is 2-isopropylmalate synthase (516 aa).

One can recognise a Pyruvate carboxyltransferase domain in the interval 5-267 (IIIFDTTLRD…STDINIKEIH (263 aa)). D14, H202, H204, and N238 together coordinate Mn(2+). The segment at 393–516 (KLEYFDVQSK…VNKELERLQK (124 aa)) is regulatory domain.

The protein belongs to the alpha-IPM synthase/homocitrate synthase family. LeuA type 1 subfamily. Homodimer. The cofactor is Mn(2+).

It localises to the cytoplasm. The catalysed reaction is 3-methyl-2-oxobutanoate + acetyl-CoA + H2O = (2S)-2-isopropylmalate + CoA + H(+). Its pathway is amino-acid biosynthesis; L-leucine biosynthesis; L-leucine from 3-methyl-2-oxobutanoate: step 1/4. Functionally, catalyzes the condensation of the acetyl group of acetyl-CoA with 3-methyl-2-oxobutanoate (2-ketoisovalerate) to form 3-carboxy-3-hydroxy-4-methylpentanoate (2-isopropylmalate). This Buchnera aphidicola subsp. Cinara cedri (strain Cc) protein is 2-isopropylmalate synthase.